The following is a 547-amino-acid chain: Mucin-13 (547 aa).

Residues M1–S210 show a composition bias toward low complexity. Positions M1–P218 are disordered. Residues S210–V249 form the EGF-like 1 domain. 3 cysteine pairs are disulfide-bonded: C214–C225, C219–C234, and C236–C248. N-linked (GlcNAc...) asparagine glycans are attached at residues N243, N244, and N263. In terms of domain architecture, SEA spans K250 to D366. EGF-like domains lie at Q361–V401 and V401–E441. Cystine bridges form between C365–C378, C370–C384, C386–C400, C409–C427, and C429–C440. A helical membrane pass occupies residues I459–I479. The Cytoplasmic segment spans residues V480–Y547. The interval K525–Y547 is disordered.

Homodimer of beta subunits. Cleaved into two subunits, alpha and beta, probably between the first EGF domain and the SEA domain. Beta subunit contains the cytoplasmic tail and alpha subunit the extracellular tail. The homooligomerization into dimers is dependent on intrachain disulfide bonds. Post-translationally, highly glycosylated.

It localises to the cell membrane. The protein resides in the secreted. Epithelial and hemopoietic transmembrane mucin that may play a role in cell signaling. The polypeptide is Mucin-13 (Muc13) (Rattus norvegicus (Rat)).